A 211-amino-acid chain; its full sequence is C-type lectin domain family 2 member L (211 aa).

Residues 1-53 are disordered; that stretch reads MEPAREPPARARPPPPAARPAPAAPRPRSPAEAEARGPEGLLRRSGSGYEGST. Over residues 10 to 28 the composition is skewed to pro residues; that stretch reads RARPPPPAARPAPAAPRPR. Phosphoserine is present on Ser-29. Residues 66 to 86 traverse the membrane as a helical segment; that stretch reads LLLGAIAVLLFAILVVMSILA. The C-type lectin domain maps to 104 to 206; that stretch reads YGRKCYYFSE…CLTTRPWVCS (103 aa). Disulfide bonds link Cys-125/Cys-205 and Cys-184/Cys-197.

The protein localises to the membrane. The sequence is that of C-type lectin domain family 2 member L (Clec2l) from Mus musculus (Mouse).